The following is a 383-amino-acid chain: S-adenosylmethionine synthase (383 aa).

His-15 is an ATP binding site. Residue Asp-17 participates in Mg(2+) binding. Glu-43 provides a ligand contact to K(+). The L-methionine site is built by Glu-56 and Gln-99. The segment at 99–109 is flexible loop; the sequence is QSPDINQGVDR. ATP-binding positions include 164-166, 230-231, Asp-239, 245-246, Ala-262, and Lys-266; these read DAK, RF, and RK. Asp-239 serves as a coordination point for L-methionine. Lys-270 serves as a coordination point for L-methionine.

The protein belongs to the AdoMet synthase family. Homotetramer; dimer of dimers. The cofactor is Mg(2+). K(+) serves as cofactor.

The protein localises to the cytoplasm. The enzyme catalyses L-methionine + ATP + H2O = S-adenosyl-L-methionine + phosphate + diphosphate. It participates in amino-acid biosynthesis; S-adenosyl-L-methionine biosynthesis; S-adenosyl-L-methionine from L-methionine: step 1/1. In terms of biological role, catalyzes the formation of S-adenosylmethionine (AdoMet) from methionine and ATP. The overall synthetic reaction is composed of two sequential steps, AdoMet formation and the subsequent tripolyphosphate hydrolysis which occurs prior to release of AdoMet from the enzyme. The protein is S-adenosylmethionine synthase of Shewanella loihica (strain ATCC BAA-1088 / PV-4).